The following is a 182-amino-acid chain: T-cell surface glycoprotein CD3 gamma chain (182 aa).

The first 22 residues, 1–22, serve as a signal peptide directing secretion; it reads MEQGKGLAGLFLVISLLQGTMA. At 23–116 the chain is on the extracellular side; sequence QQKEEKHLVK…CIELNMGTVS (94 aa). The 58-residue stretch at 37-94 folds into the Ig-like domain; it reads QGDGSVLLTCDFNEKTITWLKDGHRISPPNATKSTWNLGNGAKDPRGMYQCRGAKKKS. C46 and C87 are disulfide-bonded. An N-linked (GlcNAc...) asparagine glycan is attached at N66. A helical membrane pass occupies residues 117–137; that stretch reads GFIFAEIISIFFLAVGVYFIA. Residues 138 to 182 are Cytoplasmic-facing; the sequence is GQDGVRQSRASDKQTLLQNEQVYQPLKDREYEQYSRLQGNQVRKK. At S145 the chain carries Phosphoserine. Residue S148 is modified to Phosphoserine; by PKC. Residues 149–177 form the ITAM domain; it reads DKQTLLQNEQVYQPLKDREYEQYSRLQGN. The short motif at 153-154 is the Di-leucine motif element; that stretch reads LL.

The TCR-CD3 complex is composed of a CD3D/CD3E and a CD3G/CD3E heterodimers that preferentially associate with TCRalpha and TCRbeta, respectively, to form TCRalpha/CD3E/CD3G and TCRbeta/CD3G/CD3E trimers. In turn, the hexamer interacts with CD3Z homodimer to form the TCR-CD3 complex. Alternatively, TCRalpha and TCRbeta can be replaced by TCRgamma and TCRdelta. Phosphorylated on Tyr residues after T-cell receptor triggering by LCK in association with CD4/CD8. Phosphorylated also by PKC; leading to the TCR complex down-regulation. In terms of processing, phosphorylated on Tyr residues after T-cell receptor triggering by LCK in association with CD4/CD8.

It is found in the cell membrane. Its function is as follows. Part of the TCR-CD3 complex present on T-lymphocyte cell surface that plays an essential role in adaptive immune response. When antigen presenting cells (APCs) activate T-cell receptor (TCR), TCR-mediated signals are transmitted across the cell membrane by the CD3 chains CD3D, CD3E, CD3G and CD3Z. All CD3 chains contain immunoreceptor tyrosine-based activation motifs (ITAMs) in their cytoplasmic domain. Upon TCR engagement, these motifs become phosphorylated by Src family protein tyrosine kinases LCK and FYN, resulting in the activation of downstream signaling pathways. In addition to this role of signal transduction in T-cell activation, CD3G plays an essential role in the dynamic regulation of TCR expression at the cell surface. Indeed, constitutive TCR cycling is dependent on the di-leucine-based (diL) receptor-sorting motif present in CD3G. This Rattus norvegicus (Rat) protein is T-cell surface glycoprotein CD3 gamma chain (Cd3g).